The primary structure comprises 98 residues: NADH-ubiquinone oxidoreductase chain 4L (98 aa).

3 consecutive transmembrane segments (helical) span residues 2 to 22, 26 to 46, and 59 to 79; these read SPAV…TLMF, LMST…LATI, and IPIA…ALLA.

This sequence belongs to the complex I subunit 4L family. Core subunit of respiratory chain NADH dehydrogenase (Complex I) which is composed of 45 different subunits.

The protein localises to the mitochondrion inner membrane. The catalysed reaction is a ubiquinone + NADH + 5 H(+)(in) = a ubiquinol + NAD(+) + 4 H(+)(out). Its function is as follows. Core subunit of the mitochondrial membrane respiratory chain NADH dehydrogenase (Complex I) which catalyzes electron transfer from NADH through the respiratory chain, using ubiquinone as an electron acceptor. Part of the enzyme membrane arm which is embedded in the lipid bilayer and involved in proton translocation. The chain is NADH-ubiquinone oxidoreductase chain 4L (MT-ND4L) from Alexandromys kikuchii (Taiwan vole).